A 241-amino-acid polypeptide reads, in one-letter code: MALNPLEQFKVYTIIELPRLFGYDVSFTNSSFFTMISVILMILFLLFGIKKGSVIPGYLQAAVEYVYDFVISIIENNTGSKGLQHIPLIFTVFIFILSCNLVGVLPYSFTVTSHVIVTFALSMVVFIYITIVGFKEREVEFLRILLPKGTPSWLAPIIIIIKLFAYLVRPVSLSIRLAANMIAGHTIIKVIAGFIVNMNIFFTPAPFLFIIALIGFEVFVAILQAYIFTILTCVYLSDAVK.

A run of 8 helical transmembrane segments spans residues 29 to 49 (NSSF…LFGI), 54 to 74 (VIPG…ISII), 86 to 106 (IPLI…GVLP), 114 to 134 (HVIV…IVGF), 153 to 173 (WLAP…PVSL), 177 to 197 (LAAN…FIVN), 200 to 220 (IFFT…EVFV), and 221 to 241 (AILQ…DAVK).

It belongs to the ATPase A chain family. F-type ATPases have 2 components, CF(1) - the catalytic core - and CF(0) - the membrane proton channel. CF(1) has five subunits: alpha(3), beta(3), gamma(1), delta(1), epsilon(1). CF(0) has three main subunits: a(1), b(2) and c(9-12). The alpha and beta chains form an alternating ring which encloses part of the gamma chain. CF(1) is attached to CF(0) by a central stalk formed by the gamma and epsilon chains, while a peripheral stalk is formed by the delta and b chains.

The protein resides in the cell membrane. Its function is as follows. Key component of the proton channel; it plays a direct role in the translocation of protons across the membrane. In Wolbachia pipientis wMel, this protein is ATP synthase subunit a.